The chain runs to 259 residues: Deoxyribose-phosphate aldolase (259 aa).

The Proton donor/acceptor role is filled by aspartate 102. Catalysis depends on lysine 167, which acts as the Schiff-base intermediate with acetaldehyde. Lysine 201 (proton donor/acceptor) is an active-site residue.

The protein belongs to the DeoC/FbaB aldolase family. DeoC type 2 subfamily.

The protein resides in the cytoplasm. It carries out the reaction 2-deoxy-D-ribose 5-phosphate = D-glyceraldehyde 3-phosphate + acetaldehyde. It functions in the pathway carbohydrate degradation; 2-deoxy-D-ribose 1-phosphate degradation; D-glyceraldehyde 3-phosphate and acetaldehyde from 2-deoxy-alpha-D-ribose 1-phosphate: step 2/2. Its function is as follows. Catalyzes a reversible aldol reaction between acetaldehyde and D-glyceraldehyde 3-phosphate to generate 2-deoxy-D-ribose 5-phosphate. This Enterobacter sp. (strain 638) protein is Deoxyribose-phosphate aldolase.